Here is a 340-residue protein sequence, read N- to C-terminus: Myomesin-1 (340 aa).

The disordered stretch occupies residues 177-212 (AEKARLKSRPSAPXTGQIIVTEEEPSEEAGTENXQR). Positions 197–206 (TEEEPSEEAG) are enriched in acidic residues.

Homodimer. Interacts with TTN/titin and PNKD. Seems to be expressed in all cardiac and skeletal fibers.

It is found in the cytoplasm. Its subcellular location is the myofibril. It localises to the sarcomere. The protein resides in the m line. Major component of the vertebrate myofibrillar M band. Binds myosin, titin, and light meromyosin. This binding is dose dependent. This is Myomesin-1 (MYOM1) from Bos taurus (Bovine).